We begin with the raw amino-acid sequence, 394 residues long: Elongation factor Tu 1 (394 aa).

Residues 10 to 204 form the tr-type G domain; that stretch reads KPHVNVGTIG…ALDSYIPEPE (195 aa). The segment at 19–26 is G1; it reads GHVDHGKT. 19-26 lines the GTP pocket; the sequence is GHVDHGKT. Mg(2+) is bound at residue T26. Residues 60 to 64 are G2; that stretch reads GITIS. Residues 81–84 form a G3 region; the sequence is DCPG. Residues 81–85 and 136–139 contribute to the GTP site; these read DCPGH and NKCD. The G4 stretch occupies residues 136–139; it reads NKCD. Residues 174 to 176 are G5; it reads SAL.

This sequence belongs to the TRAFAC class translation factor GTPase superfamily. Classic translation factor GTPase family. EF-Tu/EF-1A subfamily. In terms of assembly, monomer.

It localises to the cytoplasm. The catalysed reaction is GTP + H2O = GDP + phosphate + H(+). Functionally, GTP hydrolase that promotes the GTP-dependent binding of aminoacyl-tRNA to the A-site of ribosomes during protein biosynthesis. The chain is Elongation factor Tu 1 from Vibrio vulnificus (strain YJ016).